Here is a 101-residue protein sequence, read N- to C-terminus: Small ribosomal subunit protein uS14 (101 aa).

The interval Ala-44–Val-74 is disordered. Positions Arg-61–Pro-70 are enriched in basic and acidic residues.

It belongs to the universal ribosomal protein uS14 family. Part of the 30S ribosomal subunit. Contacts proteins S3 and S10.

Binds 16S rRNA, required for the assembly of 30S particles and may also be responsible for determining the conformation of the 16S rRNA at the A site. The chain is Small ribosomal subunit protein uS14 from Cutibacterium acnes (strain DSM 16379 / KPA171202) (Propionibacterium acnes).